Here is a 137-residue protein sequence, read N- to C-terminus: Transcription antitermination protein NusB (137 aa).

The protein belongs to the NusB family.

Functionally, involved in transcription antitermination. Required for transcription of ribosomal RNA (rRNA) genes. Binds specifically to the boxA antiterminator sequence of the ribosomal RNA (rrn) operons. This Finegoldia magna (strain ATCC 29328 / DSM 20472 / WAL 2508) (Peptostreptococcus magnus) protein is Transcription antitermination protein NusB.